Here is a 113-residue protein sequence, read N- to C-terminus: UPF0102 protein Shal_4069 (113 aa).

It belongs to the UPF0102 family.

This Shewanella halifaxensis (strain HAW-EB4) protein is UPF0102 protein Shal_4069.